Consider the following 324-residue polypeptide: Putative ribose-phosphate pyrophosphokinase 1 (324 aa).

ATP-binding positions include 43–45 (DGE) and 102–103 (RQ). His-136 lines the Mg(2+) pocket. D-ribose 5-phosphate-binding positions include Asp-225 and 229–233 (NTGQT).

It belongs to the ribose-phosphate pyrophosphokinase family. Class I subfamily. Homohexamer. Requires Mg(2+) as cofactor.

Its subcellular location is the cytoplasm. The catalysed reaction is D-ribose 5-phosphate + ATP = 5-phospho-alpha-D-ribose 1-diphosphate + AMP + H(+). It participates in metabolic intermediate biosynthesis; 5-phospho-alpha-D-ribose 1-diphosphate biosynthesis; 5-phospho-alpha-D-ribose 1-diphosphate from D-ribose 5-phosphate (route I): step 1/1. In terms of biological role, involved in the biosynthesis of the central metabolite phospho-alpha-D-ribosyl-1-pyrophosphate (PRPP) via the transfer of pyrophosphoryl group from ATP to 1-hydroxyl of ribose-5-phosphate (Rib-5-P). The protein is Putative ribose-phosphate pyrophosphokinase 1 of Enterococcus faecalis (strain ATCC 700802 / V583).